A 189-amino-acid chain; its full sequence is Apolipoprotein D (189 aa).

The N-terminal stretch at 1–20 is a signal peptide; that stretch reads MVMLLLLLSALAGLFGAAEG. Gln-21 is subject to Pyrrolidone carboxylic acid. Intrachain disulfides connect Cys-28/Cys-134 and Cys-61/Cys-185. Residues Asn-65 and Asn-98 are each glycosylated (N-linked (GlcNAc...) asparagine).

The protein belongs to the calycin superfamily. Lipocalin family. As to quaternary structure, homodimer.

It localises to the secreted. APOD occurs in the macromolecular complex with lecithin-cholesterol acyltransferase. It is probably involved in the transport and binding of bilin. Appears to be able to transport a variety of ligands in a number of different contexts. This is Apolipoprotein D (APOD) from Macaca fascicularis (Crab-eating macaque).